A 125-amino-acid chain; its full sequence is Phosphoribosyl-AMP cyclohydrolase (125 aa).

A Mg(2+)-binding site is contributed by Asp74. Residue Cys75 participates in Zn(2+) binding. Mg(2+) contacts are provided by Asp76 and Asp78. Positions 92 and 99 each coordinate Zn(2+).

It belongs to the PRA-CH family. Homodimer. Mg(2+) serves as cofactor. The cofactor is Zn(2+).

The protein localises to the cytoplasm. The catalysed reaction is 1-(5-phospho-beta-D-ribosyl)-5'-AMP + H2O = 1-(5-phospho-beta-D-ribosyl)-5-[(5-phospho-beta-D-ribosylamino)methylideneamino]imidazole-4-carboxamide. The protein operates within amino-acid biosynthesis; L-histidine biosynthesis; L-histidine from 5-phospho-alpha-D-ribose 1-diphosphate: step 3/9. Its function is as follows. Catalyzes the hydrolysis of the adenine ring of phosphoribosyl-AMP. This Trichlorobacter lovleyi (strain ATCC BAA-1151 / DSM 17278 / SZ) (Geobacter lovleyi) protein is Phosphoribosyl-AMP cyclohydrolase.